Reading from the N-terminus, the 284-residue chain is D-tagatose-1,6-bisphosphate aldolase subunit GatY (284 aa).

Asp-82 acts as the Proton donor in catalysis. The Zn(2+) site is built by His-83 and His-180. Gly-181 provides a ligand contact to dihydroxyacetone phosphate. His-208 contacts Zn(2+). Dihydroxyacetone phosphate contacts are provided by residues 209-211 (GAS) and 230-233 (NVAT).

The protein belongs to the class II fructose-bisphosphate aldolase family. TagBP aldolase GatY subfamily. In terms of assembly, forms a complex with GatZ. Zn(2+) is required as a cofactor.

It carries out the reaction D-tagatofuranose 1,6-bisphosphate = D-glyceraldehyde 3-phosphate + dihydroxyacetone phosphate. It participates in carbohydrate metabolism; D-tagatose 6-phosphate degradation; D-glyceraldehyde 3-phosphate and glycerone phosphate from D-tagatose 6-phosphate: step 2/2. Its function is as follows. Catalytic subunit of the tagatose-1,6-bisphosphate aldolase GatYZ, which catalyzes the reversible aldol condensation of dihydroxyacetone phosphate (DHAP or glycerone-phosphate) with glyceraldehyde 3-phosphate (G3P) to produce tagatose 1,6-bisphosphate (TBP). Requires GatZ subunit for full activity and stability. Is involved in the catabolism of galactitol. The polypeptide is D-tagatose-1,6-bisphosphate aldolase subunit GatY (Escherichia coli O6:K15:H31 (strain 536 / UPEC)).